The primary structure comprises 115 residues: Holo-[acyl-carrier-protein] synthase (115 aa).

Mg(2+) contacts are provided by aspartate 5 and glutamate 50.

This sequence belongs to the P-Pant transferase superfamily. AcpS family. Requires Mg(2+) as cofactor.

It localises to the cytoplasm. It catalyses the reaction apo-[ACP] + CoA = holo-[ACP] + adenosine 3',5'-bisphosphate + H(+). Functionally, transfers the 4'-phosphopantetheine moiety from coenzyme A to a Ser of acyl-carrier-protein. This chain is Holo-[acyl-carrier-protein] synthase, found in Campylobacter fetus subsp. fetus (strain 82-40).